The primary structure comprises 179 residues: Large ribosomal subunit protein uL6 (179 aa).

This sequence belongs to the universal ribosomal protein uL6 family. As to quaternary structure, part of the 50S ribosomal subunit.

Functionally, this protein binds to the 23S rRNA, and is important in its secondary structure. It is located near the subunit interface in the base of the L7/L12 stalk, and near the tRNA binding site of the peptidyltransferase center. The sequence is that of Large ribosomal subunit protein uL6 from Koribacter versatilis (strain Ellin345).